Consider the following 498-residue polypeptide: Cysteine--tRNA ligase (498 aa).

Cys44 contacts Zn(2+). The 'HIGH' region signature appears at 46-56 (PTVYSDAHLGH). 3 residues coordinate Zn(2+): Cys235, His260, and Glu264. The 'KMSKS' region motif lies at 291 to 295 (KMSKS). Lys294 provides a ligand contact to ATP.

This sequence belongs to the class-I aminoacyl-tRNA synthetase family. As to quaternary structure, monomer. It depends on Zn(2+) as a cofactor.

Its subcellular location is the cytoplasm. The catalysed reaction is tRNA(Cys) + L-cysteine + ATP = L-cysteinyl-tRNA(Cys) + AMP + diphosphate. The chain is Cysteine--tRNA ligase (cysS) from Deinococcus radiodurans (strain ATCC 13939 / DSM 20539 / JCM 16871 / CCUG 27074 / LMG 4051 / NBRC 15346 / NCIMB 9279 / VKM B-1422 / R1).